A 260-amino-acid chain; its full sequence is Proteasome subunit alpha (260 aa).

It belongs to the peptidase T1A family. As to quaternary structure, the 20S proteasome core is composed of 14 alpha and 14 beta subunits that assemble into four stacked heptameric rings, resulting in a barrel-shaped structure. The two inner rings, each composed of seven catalytic beta subunits, are sandwiched by two outer rings, each composed of seven alpha subunits. The catalytic chamber with the active sites is on the inside of the barrel. Has a gated structure, the ends of the cylinder being occluded by the N-termini of the alpha-subunits. Is capped at one or both ends by the proteasome regulatory ATPase, PAN.

The protein resides in the cytoplasm. Its activity is regulated as follows. The formation of the proteasomal ATPase PAN-20S proteasome complex, via the docking of the C-termini of PAN into the intersubunit pockets in the alpha-rings, triggers opening of the gate for substrate entry. Interconversion between the open-gate and close-gate conformations leads to a dynamic regulation of the 20S proteasome proteolysis activity. Functionally, component of the proteasome core, a large protease complex with broad specificity involved in protein degradation. This Thermococcus gammatolerans (strain DSM 15229 / JCM 11827 / EJ3) protein is Proteasome subunit alpha.